The primary structure comprises 419 residues: L-rhamnose isomerase (419 aa).

The Mn(2+) site is built by His-262, Asp-294, and Asp-296.

This sequence belongs to the rhamnose isomerase family. Homotetramer. It depends on Mn(2+) as a cofactor.

Its subcellular location is the cytoplasm. The catalysed reaction is L-rhamnopyranose = L-rhamnulose. It functions in the pathway carbohydrate degradation; L-rhamnose degradation; glycerone phosphate from L-rhamnose: step 1/3. Functionally, catalyzes the interconversion of L-rhamnose and L-rhamnulose. In Salmonella newport (strain SL254), this protein is L-rhamnose isomerase.